A 184-amino-acid polypeptide reads, in one-letter code: Ribosome maturation factor RimM (184 aa).

The PRC barrel domain maps to 93–165 (DEGWYEHELV…YILITPPSGL (73 aa)).

The protein belongs to the RimM family. In terms of assembly, binds ribosomal protein uS19.

The protein resides in the cytoplasm. Functionally, an accessory protein needed during the final step in the assembly of 30S ribosomal subunit, possibly for assembly of the head region. Essential for efficient processing of 16S rRNA. May be needed both before and after RbfA during the maturation of 16S rRNA. It has affinity for free ribosomal 30S subunits but not for 70S ribosomes. The polypeptide is Ribosome maturation factor RimM (Paenarthrobacter aurescens (strain TC1)).